A 242-amino-acid polypeptide reads, in one-letter code: Small ribosomal subunit protein uS2 (242 aa).

It belongs to the universal ribosomal protein uS2 family.

The sequence is that of Small ribosomal subunit protein uS2 from Tolumonas auensis (strain DSM 9187 / NBRC 110442 / TA 4).